Here is a 361-residue protein sequence, read N- to C-terminus: Phospho-N-acetylmuramoyl-pentapeptide-transferase (361 aa).

A run of 10 helical transmembrane segments spans residues 27-47 (ILAS…MIRW), 70-90 (GTPT…CLLW), 97-117 (SLWL…VDDY), 134-154 (YFWQ…NASL), 167-187 (TVTW…IVGS), 199-219 (GLAI…AYAS), 236-256 (TGEL…FLWY), 263-283 (VFMG…VAVV), 288-308 (LVLL…ILQV), and 338-358 (KVIV…LATL).

Belongs to the glycosyltransferase 4 family. MraY subfamily. Mg(2+) serves as cofactor.

The protein resides in the cell inner membrane. It catalyses the reaction UDP-N-acetyl-alpha-D-muramoyl-L-alanyl-gamma-D-glutamyl-meso-2,6-diaminopimeloyl-D-alanyl-D-alanine + di-trans,octa-cis-undecaprenyl phosphate = di-trans,octa-cis-undecaprenyl diphospho-N-acetyl-alpha-D-muramoyl-L-alanyl-D-glutamyl-meso-2,6-diaminopimeloyl-D-alanyl-D-alanine + UMP. It functions in the pathway cell wall biogenesis; peptidoglycan biosynthesis. Functionally, catalyzes the initial step of the lipid cycle reactions in the biosynthesis of the cell wall peptidoglycan: transfers peptidoglycan precursor phospho-MurNAc-pentapeptide from UDP-MurNAc-pentapeptide onto the lipid carrier undecaprenyl phosphate, yielding undecaprenyl-pyrophosphoryl-MurNAc-pentapeptide, known as lipid I. The protein is Phospho-N-acetylmuramoyl-pentapeptide-transferase of Legionella pneumophila (strain Lens).